The primary structure comprises 425 residues: Dihydroorotase (425 aa).

Zn(2+) contacts are provided by His61 and His63. Substrate-binding positions include 63–65 and Asn95; that span reads HLR. Zn(2+) contacts are provided by Asp153, His180, and His233. Asn279 lines the substrate pocket. Residue Asp306 coordinates Zn(2+). The active site involves Asp306. Position 310 (His310) interacts with substrate.

This sequence belongs to the metallo-dependent hydrolases superfamily. DHOase family. Class I DHOase subfamily. It depends on Zn(2+) as a cofactor.

It carries out the reaction (S)-dihydroorotate + H2O = N-carbamoyl-L-aspartate + H(+). Its pathway is pyrimidine metabolism; UMP biosynthesis via de novo pathway; (S)-dihydroorotate from bicarbonate: step 3/3. Functionally, catalyzes the reversible cyclization of carbamoyl aspartate to dihydroorotate. This is Dihydroorotase from Geotalea daltonii (strain DSM 22248 / JCM 15807 / FRC-32) (Geobacter daltonii).